The sequence spans 381 residues: Pectin lyase 1 (381 aa).

A signal peptide spans 1-20; sequence MKYASFIAAAAAALASAVSA. Intrachain disulfides connect Cys-83–Cys-102 and Cys-92–Cys-227. N-linked (GlcNAc...) asparagine glycosylation occurs at Asn-130. Arg-257 is a catalytic residue. The cysteines at positions 324 and 332 are disulfide-linked.

The protein belongs to the polysaccharide lyase 1 family.

Its subcellular location is the secreted. The enzyme catalyses Eliminative cleavage of (1-&gt;4)-alpha-D-galacturonan methyl ester to give oligosaccharides with 4-deoxy-6-O-methyl-alpha-D-galact-4-enuronosyl groups at their non-reducing ends.. Pectinolytic enzymes consist of four classes of enzymes: pectin lyase, polygalacturonase, pectin methylesterase and rhamnogalacturonase. Among pectinolytic enzymes, pectin lyase is the most important in depolymerization of pectin, since it cleaves internal glycosidic bonds of highly methylated pectins. The protein is Pectin lyase 1 (pel1) of Aspergillus oryzae (strain ATCC 42149 / RIB 40) (Yellow koji mold).